Reading from the N-terminus, the 833-residue chain is Ventricular zone-expressed PH domain-containing protein 1 (833 aa).

Interaction with TGFBR1 stretches follow at residues 201-319 and 663-833; these read AELL…LANM and ESTF…TTYL. Residues 716 to 819 enclose the PH domain; sequence QPLIEGKLKE…WLQCINVALA (104 aa).

This sequence belongs to the MELT/VEPH family. In terms of assembly, interacts with TGFBR1. Specifically expressed in kidney and eye. In the eye, expressed in retinal pigmented epithelium but not in the neural retina.

It is found in the cell membrane. Its function is as follows. Interacts with TGF-beta receptor type-1 (TGFBR1) and inhibits dissociation of activated SMAD2 from TGFBR1, impeding its nuclear accumulation and resulting in impaired TGF-beta signaling. May also affect FOXO, Hippo and Wnt signaling. This is Ventricular zone-expressed PH domain-containing protein 1 (Veph1) from Mus musculus (Mouse).